Reading from the N-terminus, the 462-residue chain is Chromosomal replication initiator protein DnaA (462 aa).

The tract at residues 1 to 84 (MAVSLWQQCI…RFDIGSRPSA (84 aa)) is domain I, interacts with DnaA modulators. The domain II stretch occupies residues 84–125 (AKKPSVPAPIAPTRVANTQTKATVGTTFNVQAEPMANANHRS). The segment at 126 to 342 (NINPSYQFDN…GALNRVIANA (217 aa)) is domain III, AAA+ region. ATP-binding residues include Gly170, Gly172, Lys173, and Thr174. Residues 343 to 462 (NFTGRPITID…YANLIRTLSS (120 aa)) form a domain IV, binds dsDNA region.

This sequence belongs to the DnaA family. Oligomerizes as a right-handed, spiral filament on DNA at oriC.

It is found in the cytoplasm. Its function is as follows. Plays an essential role in the initiation and regulation of chromosomal replication. ATP-DnaA binds to the origin of replication (oriC) to initiate formation of the DNA replication initiation complex once per cell cycle. Binds the DnaA box (a 9 base pair repeat at the origin) and separates the double-stranded (ds)DNA. Forms a right-handed helical filament on oriC DNA; dsDNA binds to the exterior of the filament while single-stranded (ss)DNA is stabiized in the filament's interior. The ATP-DnaA-oriC complex binds and stabilizes one strand of the AT-rich DNA unwinding element (DUE), permitting loading of DNA polymerase. After initiation quickly degrades to an ADP-DnaA complex that is not apt for DNA replication. Binds acidic phospholipids. The protein is Chromosomal replication initiator protein DnaA of Shewanella baltica (strain OS195).